We begin with the raw amino-acid sequence, 432 residues long: Patatin-like phospholipase domain-containing protein 5 (432 aa).

Positions 12–181 (LSFSGSGYMG…SNNLPFSDCP (170 aa)) constitute a PNPLA domain. The short motif at 16 to 21 (GSGYMG) is the GXGXXG element. The GXSXG motif lies at 47 to 51 (GSSSG). Ser49 (nucleophile) is an active-site residue. Catalysis depends on Asp168, which acts as the Proton acceptor. Positions 168 to 170 (DGA) match the DGA/G motif. Residues 404–423 (ADSGLLRQQRGTAPSGNRPL) are disordered.

The enzyme catalyses a triacylglycerol + H2O = a diacylglycerol + a fatty acid + H(+). In terms of biological role, has abundant triacylglycerol lipase activity. The protein is Patatin-like phospholipase domain-containing protein 5 of Mus musculus (Mouse).